The sequence spans 660 residues: Leucine-rich repeat transmembrane protein FLRT2 (660 aa).

A signal peptide spans 1-35 (MGLQTAKWPSHGTFVLKFWLIMSLGLYSHVSKLLA). 2 disulfides stabilise this stretch: Cys-36/Cys-42 and Cys-40/Cys-49. The 32-residue stretch at 36–67 (CPSVCRCDRNFVYCNERSLTSVPLGIPEGVTV) folds into the LRRNT domain. The Extracellular segment spans residues 36–540 (CPSVCRCDRN…QTTSHTMGSP (505 aa)). LRR repeat units lie at residues 62-87 (PEGV…LHNV), 88-108 (QSVH…MNLP), 109-131 (KNVR…ALAQ), 132-157 (LLKL…AFRE), 159-181 (ISLK…LPVD), 183-202 (QELR…AFQN), 203-228 (LTSL…TFSH), 229-251 (LTKL…DLPG), 252-274 (THLI…AFAN), and 275-298 (LRKL…VFDH). An N-linked (GlcNAc...) asparagine glycan is attached at Asn-202. 2 disulfides stabilise this stretch: Cys-314/Cys-339 and Cys-316/Cys-360. Residues 338–361 (MCQGPEQVRGMAVRELNMNLLSCP) form the LRRCT domain. The span at 372 to 396 (PAPSTVSPTTQSPTVSVPSPSRGSV) shows a compositional bias: low complexity. The tract at residues 372-413 (PAPSTVSPTTQSPTVSVPSPSRGSVPPAPAPSKLPTIPDWDG) is disordered. The Fibronectin type-III domain maps to 419–517 (PPISERIQLS…ICSEATTHAS (99 aa)). The helical transmembrane segment at 541-561 (FLLAGLIGGAVIFVLVVLLSV) threads the bilayer. Over 562 to 660 (FCWHMHKKGR…SVPDLEHCHT (99 aa)) the chain is Cytoplasmic.

As to quaternary structure, self-associates (via leucine-rich repeats), giving rise to homooligomers. Interacts with FGFR1. Interacts with FGFR2. Interacts (via extracellular domain) with ADGRL1/LPHN1. Interacts (via extracellular domain) with ADGRL3 (via olfactomedin-like domain). Interacts (via extracellular domain) with UNC5D (via the first Ig-like domain). Can also interact (via extracellular domain) with UNC5B, but with much lower affinity. Interacts (via extracellular domain) with FN1. Post-translationally, N-glycosylated. Proteolytic cleavage in the juxtamembrane region gives rise to a soluble ectodomain. Cleavage is probably effected by a metalloprotease. In terms of tissue distribution, detected in brain (at protein level).

Its subcellular location is the cell membrane. It is found in the endoplasmic reticulum membrane. It localises to the synapse. The protein resides in the synaptosome. The protein localises to the cell junction. Its subcellular location is the focal adhesion. It is found in the secreted. It localises to the extracellular space. The protein resides in the extracellular matrix. The protein localises to the microsome membrane. Functionally, functions in cell-cell adhesion, cell migration and axon guidance. Mediates cell-cell adhesion via its interactions with ADGRL3 and probably also other latrophilins that are expressed at the surface of adjacent cells. May play a role in the migration of cortical neurons during brain development via its interaction with UNC5D. Mediates axon growth cone collapse and plays a repulsive role in neuron guidance via its interaction with UNC5D, and possibly also other UNC-5 family members. Plays a role in fibroblast growth factor-mediated signaling cascades. Required for normal organization of the cardiac basement membrane during embryogenesis, and for normal embryonic epicardium and heart morphogenesis. The sequence is that of Leucine-rich repeat transmembrane protein FLRT2 from Rattus norvegicus (Rat).